A 1357-amino-acid polypeptide reads, in one-letter code: DNA-directed RNA polymerase subunit beta (1357 aa).

Belongs to the RNA polymerase beta chain family. The RNAP catalytic core consists of 2 alpha, 1 beta, 1 beta' and 1 omega subunit. When a sigma factor is associated with the core the holoenzyme is formed, which can initiate transcription.

It catalyses the reaction RNA(n) + a ribonucleoside 5'-triphosphate = RNA(n+1) + diphosphate. In terms of biological role, DNA-dependent RNA polymerase catalyzes the transcription of DNA into RNA using the four ribonucleoside triphosphates as substrates. The protein is DNA-directed RNA polymerase subunit beta of Pseudomonas syringae pv. tomato (strain ATCC BAA-871 / DC3000).